A 460-amino-acid polypeptide reads, in one-letter code: Bifunctional protein GlmU (460 aa).

The pyrophosphorylase stretch occupies residues 1–232 (MALNVVILAA…AIEVEGANNR (232 aa)). UDP-N-acetyl-alpha-D-glucosamine-binding positions include 8-11 (LAAG), Lys22, Gln73, 78-79 (GT), 100-102 (YGD), Gly137, Glu157, Asn172, and Asn230. Asp102 is a binding site for Mg(2+). Position 230 (Asn230) interacts with Mg(2+). The linker stretch occupies residues 233 to 253 (VQLAQLERAYQAREAEKLMLA). Residues 254–460 (GANLRDPSRI…GWQRPVKIKK (207 aa)) are N-acetyltransferase. Positions 336 and 354 each coordinate UDP-N-acetyl-alpha-D-glucosamine. His366 acts as the Proton acceptor in catalysis. UDP-N-acetyl-alpha-D-glucosamine contacts are provided by Tyr369 and Asn380. Acetyl-CoA is bound by residues Ala383, 389–390 (NY), Ser408, Ala426, and Arg443.

This sequence in the N-terminal section; belongs to the N-acetylglucosamine-1-phosphate uridyltransferase family. It in the C-terminal section; belongs to the transferase hexapeptide repeat family. As to quaternary structure, homotrimer. The cofactor is Mg(2+).

It is found in the cytoplasm. It catalyses the reaction alpha-D-glucosamine 1-phosphate + acetyl-CoA = N-acetyl-alpha-D-glucosamine 1-phosphate + CoA + H(+). It carries out the reaction N-acetyl-alpha-D-glucosamine 1-phosphate + UTP + H(+) = UDP-N-acetyl-alpha-D-glucosamine + diphosphate. Its pathway is nucleotide-sugar biosynthesis; UDP-N-acetyl-alpha-D-glucosamine biosynthesis; N-acetyl-alpha-D-glucosamine 1-phosphate from alpha-D-glucosamine 6-phosphate (route II): step 2/2. It functions in the pathway nucleotide-sugar biosynthesis; UDP-N-acetyl-alpha-D-glucosamine biosynthesis; UDP-N-acetyl-alpha-D-glucosamine from N-acetyl-alpha-D-glucosamine 1-phosphate: step 1/1. It participates in bacterial outer membrane biogenesis; LPS lipid A biosynthesis. Its function is as follows. Catalyzes the last two sequential reactions in the de novo biosynthetic pathway for UDP-N-acetylglucosamine (UDP-GlcNAc). The C-terminal domain catalyzes the transfer of acetyl group from acetyl coenzyme A to glucosamine-1-phosphate (GlcN-1-P) to produce N-acetylglucosamine-1-phosphate (GlcNAc-1-P), which is converted into UDP-GlcNAc by the transfer of uridine 5-monophosphate (from uridine 5-triphosphate), a reaction catalyzed by the N-terminal domain. The protein is Bifunctional protein GlmU of Shewanella baltica (strain OS195).